Consider the following 525-residue polypeptide: Protein-export membrane protein SecD (525 aa).

Transmembrane regions (helical) follow at residues 16–36 (VLLLILFLIGSVVSMSIKGLT), 368–388 (QAIIAGIGALIAVLLIVYFHY), 395–415 (IPVASTSLFEVIIILGIAALI), 421–441 (LPSIAGIIAAIGTGVDQQIVI), 466–486 (AFFIIFASAATTIVAMSFLLV), and 488–508 (FVGTLKGFAVTTILGVLIGVL).

This sequence belongs to the SecD/SecF family. SecD subfamily. Part of the protein translocation apparatus. Forms a complex with SecF.

The protein localises to the cell membrane. Functionally, involved in protein export. The chain is Protein-export membrane protein SecD from Thermococcus gammatolerans (strain DSM 15229 / JCM 11827 / EJ3).